The sequence spans 471 residues: Cleavage and polyadenylation specificity factor subunit 7 (471 aa).

The segment at 34–68 (VLTAASQPSDDRSSSTEPPPPVRQEPAPKPNNKTP) is disordered. The segment covering 50-62 (EPPPPVRQEPAPK) has biased composition (pro residues). The RRM domain maps to 82–162 (AAVYVGSFSW…EKVDVRPATR (81 aa)). The interval 176 to 220 (ECVRVPRGGIPPRAHSRDSSDSADGRATPSENLVPSSARVDKPPS) is disordered. Residues 190–199 (HSRDSSDSAD) are compositionally biased toward basic and acidic residues. The residue at position 203 (threonine 203) is a Phosphothreonine. Residue serine 205 is modified to Phosphoserine. Residue lysine 354 forms a Glycyl lysine isopeptide (Lys-Gly) (interchain with G-Cter in SUMO2) linkage. The tract at residues 409 to 471 (SVGASGSSSR…HRDRERDRHH (63 aa)) is disordered. Phosphoserine is present on residues serine 413 and serine 423. The segment at 418–469 (RKRHRSRERSPSRSRESSRRHRDLLHNEDRHDDYFQERNREHERHRDRERDR) is arg/Ser-rich domain. Basic and acidic residues-rich tracts occupy residues 425–434 (ERSPSRSRES) and 441–471 (LLHN…DRHH).

The protein belongs to the RRM CPSF6/7 family. Component of the cleavage factor Im (CFIm) complex which is a heterotetramer composed of two subunits of NUDT21/CPSF5 and two subunits of CPSF6 or CPSF7 or a heterodimer of CPSF6 and CPSF7. The cleavage factor Im (CFIm) complex associates with the CPSF and CSTF complexes to promote the assembly of the core mRNA 3'-processing machinery. Interacts with NUDT21/CPSF5. Interacts (via Arg/Ser-rich domain) with FIP1L1 (preferentially via unphosphorylated form and Arg/Glu/Asp-rich region); this interaction mediates, at least in part, the interaction between the CFIm and CPSF complexes and may be inhibited by CPSF7 hyper-phosphorylation. In terms of processing, phosphorylated. Asymmetrically dimethylated on arginine residues by PRMT1.

Its subcellular location is the nucleus. It is found in the cytoplasm. Its function is as follows. Component of the cleavage factor Im (CFIm) complex that functions as an activator of the pre-mRNA 3'-end cleavage and polyadenylation processing required for the maturation of pre-mRNA into functional mRNAs. CFIm contributes to the recruitment of multiprotein complexes on specific sequences on the pre-mRNA 3'-end, so called cleavage and polyadenylation signals (pA signals). Most pre-mRNAs contain multiple pA signals, resulting in alternative cleavage and polyadenylation (APA) producing mRNAs with variable 3'-end formation. The CFIm complex acts as a key regulator of cleavage and polyadenylation site choice during APA through its binding to 5'-UGUA-3' elements localized in the 3'-untranslated region (UTR) for a huge number of pre-mRNAs. CPSF7 activates directly the mRNA 3'-processing machinery. Binds to pA signals in RNA substrates. This Mus musculus (Mouse) protein is Cleavage and polyadenylation specificity factor subunit 7.